A 590-amino-acid chain; its full sequence is Asparagine synthetase [glutamine-hydrolyzing] (590 aa).

Catalysis depends on cysteine 2, which acts as the For GATase activity. Residues 2–185 enclose the Glutamine amidotransferase type-2 domain; the sequence is CGILAVLGCS…PGNLYSSRSG (184 aa). Residues 50 to 54, 75 to 77, and aspartate 98 each bind L-glutamine; these read RLAII and NGE. The 324-residue stretch at 193–516 folds into the Asparagine synthetase domain; that stretch reads PQWYNETIPS…PQNSARFTVP (324 aa). Residues leucine 231, valine 267, and 341 to 342 each bind ATP; that span reads SG.

It carries out the reaction L-aspartate + L-glutamine + ATP + H2O = L-asparagine + L-glutamate + AMP + diphosphate + H(+). It functions in the pathway amino-acid biosynthesis; L-asparagine biosynthesis; L-asparagine from L-aspartate (L-Gln route): step 1/1. This is Asparagine synthetase [glutamine-hydrolyzing] from Asparagus officinalis (Garden asparagus).